A 294-amino-acid polypeptide reads, in one-letter code: 33 kDa chaperonin (294 aa).

Disulfide bonds link C230–C232 and C263–C266.

Belongs to the HSP33 family. Post-translationally, under oxidizing conditions two disulfide bonds are formed involving the reactive cysteines. Under reducing conditions zinc is bound to the reactive cysteines and the protein is inactive.

It localises to the cytoplasm. Redox regulated molecular chaperone. Protects both thermally unfolding and oxidatively damaged proteins from irreversible aggregation. Plays an important role in the bacterial defense system toward oxidative stress. The polypeptide is 33 kDa chaperonin (Chromobacterium violaceum (strain ATCC 12472 / DSM 30191 / JCM 1249 / CCUG 213 / NBRC 12614 / NCIMB 9131 / NCTC 9757 / MK)).